Here is a 229-residue protein sequence, read N- to C-terminus: Ribonuclease 3 (229 aa).

In terms of domain architecture, RNase III spans 5–127 (LDRLERKLGY…LIGAIYQDAD (123 aa)). Residue glutamate 40 participates in Mg(2+) binding. Aspartate 44 is a catalytic residue. Mg(2+) is bound by residues aspartate 113 and glutamate 116. Glutamate 116 is an active-site residue. The region spanning 154–224 (DPKTRLQEFL…AAAALIALGV (71 aa)) is the DRBM domain.

The protein belongs to the ribonuclease III family. In terms of assembly, homodimer. It depends on Mg(2+) as a cofactor.

Its subcellular location is the cytoplasm. It catalyses the reaction Endonucleolytic cleavage to 5'-phosphomonoester.. In terms of biological role, digests double-stranded RNA. Involved in the processing of primary rRNA transcript to yield the immediate precursors to the large and small rRNAs (23S and 16S). Processes some mRNAs, and tRNAs when they are encoded in the rRNA operon. Processes pre-crRNA and tracrRNA of type II CRISPR loci if present in the organism. The chain is Ribonuclease 3 from Pseudomonas entomophila (strain L48).